A 172-amino-acid polypeptide reads, in one-letter code: MDRAEKSELVTHLNGVFANAGVVVVAHYSGLTVNQMSDLRSRMAKAGASFKVTKNRLAKLALDGTPMTEIGDLFAGPTAIAYSQDPVAAPKVAIEFAKENQKLVILGGAMGQTVLDAKAVKQLADLPSLDELRAKIVGMIQTPATRIAGVLQAPGGQLARVLNAYATKSEAA.

The protein belongs to the universal ribosomal protein uL10 family. In terms of assembly, part of the ribosomal stalk of the 50S ribosomal subunit. The N-terminus interacts with L11 and the large rRNA to form the base of the stalk. The C-terminus forms an elongated spine to which L12 dimers bind in a sequential fashion forming a multimeric L10(L12)X complex.

Functionally, forms part of the ribosomal stalk, playing a central role in the interaction of the ribosome with GTP-bound translation factors. The polypeptide is Large ribosomal subunit protein uL10 (Parvibaculum lavamentivorans (strain DS-1 / DSM 13023 / NCIMB 13966)).